Here is a 270-residue protein sequence, read N- to C-terminus: uncharacterized protein (270 aa).

Belongs to the GSP E family.

This is an uncharacterized protein from Methanocaldococcus jannaschii (strain ATCC 43067 / DSM 2661 / JAL-1 / JCM 10045 / NBRC 100440) (Methanococcus jannaschii).